A 249-amino-acid chain; its full sequence is Pulmonary surfactant-associated protein A (249 aa).

The first 20 residues, 1 to 20, serve as a signal peptide directing secretion; that stretch reads MLRWPLALTFLLLAVSGLEC. One can recognise a Collagen-like domain in the interval 28–100; that stretch reads ASPGIPGTPG…PGERGPPGLP (73 aa). A disordered region spans residues 29 to 102; it reads SPGIPGTPGS…ERGPPGLPAH (74 aa). 8 positions are modified to 4-hydroxyproline: proline 30, proline 33, proline 36, proline 42, proline 54, proline 57, proline 63, and proline 70. Positions 42 to 51 are enriched in basic and acidic residues; the sequence is PGRDGRDGIK. Over residues 84–93 the composition is skewed to basic and acidic residues; that stretch reads ERGEKGEPGE. Positions 133–249 constitute a C-type lectin domain; sequence AVGEKVFSTN…QQYRLAICEF (117 aa). Cystine bridges form between cysteine 155/cysteine 247 and cysteine 225/cysteine 239. An N-linked (GlcNAc...) asparagine glycan is attached at asparagine 208. Ca(2+)-binding residues include glutamate 216, arginine 218, asparagine 235, and aspartate 236.

This sequence belongs to the SFTPA family. In terms of assembly, oligomeric complex of 6 set of homotrimers.

Its subcellular location is the secreted. It localises to the extracellular space. The protein localises to the extracellular matrix. It is found in the surface film. Its function is as follows. In presence of calcium ions, it binds to surfactant phospholipids and contributes to lower the surface tension at the air-liquid interface in the alveoli of the mammalian lung and is essential for normal respiration. Enhances the expression of MYO18A/SP-R210 on alveolar macrophages. This is Pulmonary surfactant-associated protein A (SFTPA1) from Sus scrofa (Pig).